A 245-amino-acid chain; its full sequence is MIIPALDLIDGKVVRLHQGDYAQQRDYQHDPLSHFQQYEQQGAKLLHLVDLTGAKDPSARQIPLLRKLLAAVSIPVQVGGGIRTEEDVKTLLDAGANRIVIGSIAIKQPALVTQWFKRYGAENIVLALDVRINDTGMKQVAINGWQENSSVTLEQVIEQYLPCGLKYVLCTDISRDGTLTGSNVELYRAICQYYPQIVFQASGGIGTLNDIASLPTSGVAGVIIGRALLDEKFTLKEAIQCWQNA.

Residue aspartate 7 is the Proton acceptor of the active site. Aspartate 129 (proton donor) is an active-site residue.

The protein belongs to the HisA/HisF family.

It localises to the cytoplasm. It carries out the reaction 1-(5-phospho-beta-D-ribosyl)-5-[(5-phospho-beta-D-ribosylamino)methylideneamino]imidazole-4-carboxamide = 5-[(5-phospho-1-deoxy-D-ribulos-1-ylimino)methylamino]-1-(5-phospho-beta-D-ribosyl)imidazole-4-carboxamide. It functions in the pathway amino-acid biosynthesis; L-histidine biosynthesis; L-histidine from 5-phospho-alpha-D-ribose 1-diphosphate: step 4/9. The chain is 1-(5-phosphoribosyl)-5-[(5-phosphoribosylamino)methylideneamino] imidazole-4-carboxamide isomerase 1 (hisA1) from Photorhabdus laumondii subsp. laumondii (strain DSM 15139 / CIP 105565 / TT01) (Photorhabdus luminescens subsp. laumondii).